A 553-amino-acid chain; its full sequence is Glucose-6-phosphate isomerase (553 aa).

The Proton donor role is filled by E355. Residues H386 and K513 contribute to the active site.

This sequence belongs to the GPI family.

It localises to the cytoplasm. The enzyme catalyses alpha-D-glucose 6-phosphate = beta-D-fructose 6-phosphate. The protein operates within carbohydrate biosynthesis; gluconeogenesis. It participates in carbohydrate degradation; glycolysis; D-glyceraldehyde 3-phosphate and glycerone phosphate from D-glucose: step 2/4. Its function is as follows. Catalyzes the reversible isomerization of glucose-6-phosphate to fructose-6-phosphate. This chain is Glucose-6-phosphate isomerase, found in Baumannia cicadellinicola subsp. Homalodisca coagulata.